We begin with the raw amino-acid sequence, 234 residues long: Multicopy suppressor of SEC21 protein 28 (234 aa).

At 1 to 47 the chain is on the cytoplasmic side; that stretch reads MQTPPESTDVKLDTLNEPSAHLIEKNVALPKDIFRSYLSYWIYEIAR. Residue threonine 3 is modified to Phosphothreonine. A helical membrane pass occupies residues 48–68; that stretch reads YTPVMILSLVIGVLVLLIIFF. Topologically, residues 69–72 are extracellular; the sequence is NDNE. A helical membrane pass occupies residues 73-93; sequence ACVFNSAIFAFTSLVGLLIIL. Topologically, residues 94–234 are cytoplasmic; sequence SDGNPKLVSR…NIDALLKKTE (141 aa). Residues 231 to 234 are COPI binding; sequence KKTE.

The protein belongs to the DUP/COS family. In terms of assembly, interacts with MST27. Binds to coatomer proteins of COPI and SEC23/SEC24 of COPII coated vesicles.

The protein resides in the endoplasmic reticulum. The protein localises to the golgi apparatus. Its subcellular location is the cytoplasmic vesicle. It is found in the COPI-coated vesicle membrane. It localises to the COPII-coated vesicle membrane. In terms of biological role, involved in protein trafficking vesicle formation, probably by stabilizing of coatomer at the Golgi membrane and thus allowing the efficient formation of COPI coated vesicles. This Saccharomyces cerevisiae (strain ATCC 204508 / S288c) (Baker's yeast) protein is Multicopy suppressor of SEC21 protein 28 (MST28).